Reading from the N-terminus, the 347-residue chain is Phosphate acyltransferase (347 aa).

The protein belongs to the PlsX family. In terms of assembly, homodimer. Probably interacts with PlsY.

It localises to the cytoplasm. It catalyses the reaction a fatty acyl-[ACP] + phosphate = an acyl phosphate + holo-[ACP]. The protein operates within lipid metabolism; phospholipid metabolism. Its function is as follows. Catalyzes the reversible formation of acyl-phosphate (acyl-PO(4)) from acyl-[acyl-carrier-protein] (acyl-ACP). This enzyme utilizes acyl-ACP as fatty acyl donor, but not acyl-CoA. In Anaplasma marginale (strain St. Maries), this protein is Phosphate acyltransferase.